A 263-amino-acid polypeptide reads, in one-letter code: Small ribosomal subunit protein eS4 (263 aa).

The region spanning 42–104 (LPLIVFLRNR…TGEHFRLVYD (63 aa)) is the S4 RNA-binding domain.

This sequence belongs to the eukaryotic ribosomal protein eS4 family.

The protein is Small ribosomal subunit protein eS4 (RPS4Y1) of Pongo pygmaeus (Bornean orangutan).